A 282-amino-acid polypeptide reads, in one-letter code: Bifunctional protein FolD (282 aa).

NADP(+) is bound by residues 164–166 (GRS) and Ser189.

This sequence belongs to the tetrahydrofolate dehydrogenase/cyclohydrolase family. Homodimer.

The enzyme catalyses (6R)-5,10-methylene-5,6,7,8-tetrahydrofolate + NADP(+) = (6R)-5,10-methenyltetrahydrofolate + NADPH. The catalysed reaction is (6R)-5,10-methenyltetrahydrofolate + H2O = (6R)-10-formyltetrahydrofolate + H(+). The protein operates within one-carbon metabolism; tetrahydrofolate interconversion. Catalyzes the oxidation of 5,10-methylenetetrahydrofolate to 5,10-methenyltetrahydrofolate and then the hydrolysis of 5,10-methenyltetrahydrofolate to 10-formyltetrahydrofolate. The chain is Bifunctional protein FolD from Anaeromyxobacter dehalogenans (strain 2CP-C).